A 377-amino-acid polypeptide reads, in one-letter code: Succinyl-diaminopimelate desuccinylase (377 aa).

His68 provides a ligand contact to Zn(2+). The active site involves Asp70. Asp101 serves as a coordination point for Zn(2+). Glu135 (proton acceptor) is an active-site residue. The Zn(2+) site is built by Glu136, Glu164, and His350.

It belongs to the peptidase M20A family. DapE subfamily. Homodimer. It depends on Zn(2+) as a cofactor. Co(2+) serves as cofactor.

It catalyses the reaction N-succinyl-(2S,6S)-2,6-diaminopimelate + H2O = (2S,6S)-2,6-diaminopimelate + succinate. It functions in the pathway amino-acid biosynthesis; L-lysine biosynthesis via DAP pathway; LL-2,6-diaminopimelate from (S)-tetrahydrodipicolinate (succinylase route): step 3/3. Its function is as follows. Catalyzes the hydrolysis of N-succinyl-L,L-diaminopimelic acid (SDAP), forming succinate and LL-2,6-diaminopimelate (DAP), an intermediate involved in the bacterial biosynthesis of lysine and meso-diaminopimelic acid, an essential component of bacterial cell walls. The chain is Succinyl-diaminopimelate desuccinylase from Aliivibrio salmonicida (strain LFI1238) (Vibrio salmonicida (strain LFI1238)).